Here is a 470-residue protein sequence, read N- to C-terminus: Uronate isomerase (470 aa).

This sequence belongs to the metallo-dependent hydrolases superfamily. Uronate isomerase family.

The enzyme catalyses D-glucuronate = D-fructuronate. It catalyses the reaction aldehydo-D-galacturonate = keto-D-tagaturonate. It functions in the pathway carbohydrate metabolism; pentose and glucuronate interconversion. This Salmonella agona (strain SL483) protein is Uronate isomerase.